The primary structure comprises 107 residues: Ig kappa chain V-VI region NQ2-17.4.1 (107 aa).

Residues 1-23 (QIVLTQSPAIMSASPGQKVTMTC) form a framework-1 region. Cys23 and Cys87 form a disulfide bridge. The interval 24-33 (SASSSVSYMH) is complementarity-determining-1. The interval 34–48 (WYQQKSGTSPKRWIY) is framework-2. The interval 49–55 (DTSKLAS) is complementarity-determining-2. The interval 56 to 87 (GVPARFSGSGSATSYSLTITSMQAEDAATYYC) is framework-3. The complementarity-determining-3 stretch occupies residues 88-96 (QQWSSNPLT). Residues 97 to 106 (FGAGTKLELK) are framework-4.

Functionally, anti-2-phenyl oxazolone (PHOX) Antibody. This is Ig kappa chain V-VI region NQ2-17.4.1 from Mus musculus (Mouse).